We begin with the raw amino-acid sequence, 299 residues long: Bifunctional protein FolD (299 aa).

NADP(+) contacts are provided by residues 168–170 (GRS), Ser193, and Ile234.

This sequence belongs to the tetrahydrofolate dehydrogenase/cyclohydrolase family. Homodimer.

It catalyses the reaction (6R)-5,10-methylene-5,6,7,8-tetrahydrofolate + NADP(+) = (6R)-5,10-methenyltetrahydrofolate + NADPH. The enzyme catalyses (6R)-5,10-methenyltetrahydrofolate + H2O = (6R)-10-formyltetrahydrofolate + H(+). It participates in one-carbon metabolism; tetrahydrofolate interconversion. Catalyzes the oxidation of 5,10-methylenetetrahydrofolate to 5,10-methenyltetrahydrofolate and then the hydrolysis of 5,10-methenyltetrahydrofolate to 10-formyltetrahydrofolate. The protein is Bifunctional protein FolD of Rhizobium johnstonii (strain DSM 114642 / LMG 32736 / 3841) (Rhizobium leguminosarum bv. viciae).